We begin with the raw amino-acid sequence, 147 residues long: Hemoglobin subunit epsilon (147 aa).

Residues 3–147 enclose the Globin domain; the sequence is HFTAEEKAAI…VAIALGHKYH (145 aa). Phosphoserine occurs at positions 14 and 51. Positions 64 and 93 each coordinate heme b.

The protein belongs to the globin family. Heterotetramer of two alpha chains and two epsilon chains in early embryonic hemoglobin Gower-2; two zeta chains and two epsilon chains in early embryonic hemoglobin Gower-1. In terms of tissue distribution, red blood cells.

The epsilon chain is a beta-type chain of early mammalian embryonic hemoglobin. In Saimiri boliviensis boliviensis (Bolivian squirrel monkey), this protein is Hemoglobin subunit epsilon (HBE1).